Here is a 418-residue protein sequence, read N- to C-terminus: Serine protease inhibitor A3M (418 aa).

Positions 1 to 20 are cleaved as a signal peptide; that stretch reads MAFIAALGILMAGICPTVLC. Residues Asn-104, Asn-184, and Asn-269 are each glycosylated (N-linked (GlcNAc...) asparagine). The RCL stretch occupies residues 367 to 392; the sequence is GTEAAAATGFIFGFRSRRLQTMTVQF.

It belongs to the serpin family. As to expression, expressed in liver and testis.

It is found in the secreted. The sequence is that of Serine protease inhibitor A3M (Serpina3m) from Mus musculus (Mouse).